The primary structure comprises 326 residues: tRNA(Ile)-lysidine synthase (326 aa).

33 to 38 (SGGPDS) is an ATP binding site.

The protein belongs to the tRNA(Ile)-lysidine synthase family.

It is found in the cytoplasm. It catalyses the reaction cytidine(34) in tRNA(Ile2) + L-lysine + ATP = lysidine(34) in tRNA(Ile2) + AMP + diphosphate + H(+). Ligates lysine onto the cytidine present at position 34 of the AUA codon-specific tRNA(Ile) that contains the anticodon CAU, in an ATP-dependent manner. Cytidine is converted to lysidine, thus changing the amino acid specificity of the tRNA from methionine to isoleucine. The polypeptide is tRNA(Ile)-lysidine synthase (Novosphingobium aromaticivorans (strain ATCC 700278 / DSM 12444 / CCUG 56034 / CIP 105152 / NBRC 16084 / F199)).